The sequence spans 590 residues: Phosphomethylpyrimidine synthase (590 aa).

Substrate-binding positions include Asn197, Met226, Tyr255, His291, 311–313 (SRG), 352–355 (DGLR), and Glu391. His395 lines the Zn(2+) pocket. Tyr418 contacts substrate. Residue His459 participates in Zn(2+) binding. Cys539, Cys542, and Cys547 together coordinate [4Fe-4S] cluster.

The protein belongs to the ThiC family. [4Fe-4S] cluster serves as cofactor.

The catalysed reaction is 5-amino-1-(5-phospho-beta-D-ribosyl)imidazole + S-adenosyl-L-methionine = 4-amino-2-methyl-5-(phosphooxymethyl)pyrimidine + CO + 5'-deoxyadenosine + formate + L-methionine + 3 H(+). Its pathway is cofactor biosynthesis; thiamine diphosphate biosynthesis. Its function is as follows. Catalyzes the synthesis of the hydroxymethylpyrimidine phosphate (HMP-P) moiety of thiamine from aminoimidazole ribotide (AIR) in a radical S-adenosyl-L-methionine (SAM)-dependent reaction. This Bacillus velezensis (strain DSM 23117 / BGSC 10A6 / LMG 26770 / FZB42) (Bacillus amyloliquefaciens subsp. plantarum) protein is Phosphomethylpyrimidine synthase.